Reading from the N-terminus, the 221-residue chain is Guanylate kinase (221 aa).

In terms of domain architecture, Guanylate kinase-like spans 20 to 198 (GSLFMVVAPS…ALAELRTVVQ (179 aa)). Residue 27–34 (APSGAGKS) participates in ATP binding.

The protein belongs to the guanylate kinase family.

Its subcellular location is the cytoplasm. The enzyme catalyses GMP + ATP = GDP + ADP. In terms of biological role, essential for recycling GMP and indirectly, cGMP. This is Guanylate kinase from Ralstonia nicotianae (strain ATCC BAA-1114 / GMI1000) (Ralstonia solanacearum).